The sequence spans 371 residues: Flagellar P-ring protein (371 aa).

The N-terminal stretch at 1-25 is a signal peptide; sequence MKMRACKWLLTLAVAFAATLSSAYA.

It belongs to the FlgI family. In terms of assembly, the basal body constitutes a major portion of the flagellar organelle and consists of four rings (L,P,S, and M) mounted on a central rod.

It is found in the periplasm. The protein resides in the bacterial flagellum basal body. Its function is as follows. Assembles around the rod to form the L-ring and probably protects the motor/basal body from shearing forces during rotation. The chain is Flagellar P-ring protein from Sinorhizobium medicae (strain WSM419) (Ensifer medicae).